The following is a 139-amino-acid chain: MRLTQGCFSFLPDLTDEQIEKQVNYAISKGWAMNVEWTDDPHPRNNYWELWGLPLFDIKDPASVMFELQEARKACAAGYIRMNAFDASYGTESCVMSFIVNRPANEPGFYLERAEGKGRQINYTIKSYSVQANPEGGRY.

Belongs to the RuBisCO small chain family. Heterohexadecamer of 8 large and 8 small subunits.

The protein localises to the plastid. Its subcellular location is the chloroplast. In terms of biological role, ruBisCO catalyzes two reactions: the carboxylation of D-ribulose 1,5-bisphosphate, the primary event in carbon dioxide fixation, as well as the oxidative fragmentation of the pentose substrate in the photorespiration process. Both reactions occur simultaneously and in competition at the same active site. Although the small subunit is not catalytic it is essential for maximal activity. In Cylindrotheca sp. (strain N1) (Marine diatom), this protein is Ribulose bisphosphate carboxylase small subunit.